Reading from the N-terminus, the 200-residue chain is dITP/XTP pyrophosphatase (200 aa).

Residue 7 to 12 participates in substrate binding; that stretch reads SNNRGK. The active-site Proton acceptor is the Asp68. Position 68 (Asp68) interacts with Mg(2+). Residues Ala69, 154–157, Lys177, and 182–183 each bind substrate; these read FGFD and HR.

It belongs to the HAM1 NTPase family. In terms of assembly, homodimer. Requires Mg(2+) as cofactor.

It catalyses the reaction XTP + H2O = XMP + diphosphate + H(+). The enzyme catalyses dITP + H2O = dIMP + diphosphate + H(+). The catalysed reaction is ITP + H2O = IMP + diphosphate + H(+). Functionally, pyrophosphatase that catalyzes the hydrolysis of nucleoside triphosphates to their monophosphate derivatives, with a high preference for the non-canonical purine nucleotides XTP (xanthosine triphosphate), dITP (deoxyinosine triphosphate) and ITP. Seems to function as a house-cleaning enzyme that removes non-canonical purine nucleotides from the nucleotide pool, thus preventing their incorporation into DNA/RNA and avoiding chromosomal lesions. In Delftia acidovorans (strain DSM 14801 / SPH-1), this protein is dITP/XTP pyrophosphatase.